A 110-amino-acid polypeptide reads, in one-letter code: DNA-directed RNA polymerase subunit omega (110 aa).

This sequence belongs to the RNA polymerase subunit omega family. The RNAP catalytic core consists of 2 alpha, 1 beta, 1 beta' and 1 omega subunit. When a sigma factor is associated with the core the holoenzyme is formed, which can initiate transcription.

The catalysed reaction is RNA(n) + a ribonucleoside 5'-triphosphate = RNA(n+1) + diphosphate. Promotes RNA polymerase assembly. Latches the N- and C-terminal regions of the beta' subunit thereby facilitating its interaction with the beta and alpha subunits. The protein is DNA-directed RNA polymerase subunit omega of Vesicomyosocius okutanii subsp. Calyptogena okutanii (strain HA).